The primary structure comprises 92 residues: Beta-2-microglobulin (92 aa).

The Ig-like C1-type domain occupies 2 to 91 (PQIQVYTRHP…VSMKEPKTVN (90 aa)). The cysteines at positions 22 and 77 are disulfide-linked.

Belongs to the beta-2-microglobulin family. In terms of assembly, heterodimer of an alpha chain and a beta chain. Beta-2-microglobulin is the beta-chain of major histocompatibility complex class I molecules.

The protein resides in the secreted. Functionally, component of the class I major histocompatibility complex (MHC). Involved in the presentation of peptide antigens to the immune system. This is Beta-2-microglobulin (B2m) from Mus caroli (Ryukyu mouse).